Reading from the N-terminus, the 393-residue chain is MTNEEPLPKKVRLNESDFKVLPREELLQRWKQFEAYVQALENKYTDLNSNDVTGLRESEEKLKQQQQDSARRENILVMRLATKEQEMQECTTQIQHLKQVQQPSVAQLRATMVDPAINLFFIKMKAELEQTKDKLEQAQNELSAWKFTPDSQTGKKLMAKCRMLIQENQELGRQLSQGRIAQLEAELALQKKYSEELKSSQDELNDFIIQLDEEVEGMQSTILVLQQQLKDSRQQLSQFQQQIQTSGNRTPSSESKDEGETSGKDCGRILNGPSNGGSSHQRTHSSVGLYREGSSTEEDFSASPINEGKLPNHSEERTSRGGSSYMNQLSTGYESVDSPTGSENSLTHQSNDTDSNHDSQEEKPVSGKGNRTVSSRHLQNGLDSSVNVQGSVL.

Positions 240–393 (QQQIQTSGNR…SSVNVQGSVL (154 aa)) are disordered. Over residues 254–267 (ESKDEGETSGKDCG) the composition is skewed to basic and acidic residues. A compositionally biased stretch (polar residues) spans 272 to 286 (GPSNGGSSHQRTHSS). Residues 310–319 (LPNHSEERTS) are compositionally biased toward basic and acidic residues. A compositionally biased stretch (polar residues) spans 320–353 (RGGSSYMNQLSTGYESVDSPTGSENSLTHQSNDT). Positions 354-365 (DSNHDSQEEKPV) are enriched in basic and acidic residues. The span at 369–393 (GNRTVSSRHLQNGLDSSVNVQGSVL) shows a compositional bias: polar residues.

This sequence belongs to the fl(2)d family. Component of the WMM complex, a N6-methyltransferase complex composed of a catalytic subcomplex, named MAC, and of an associated subcomplex, named MACOM. Component of the MACOM subcomplex.

The protein localises to the nucleus speckle. Its subcellular location is the nucleus. It is found in the nucleoplasm. Functionally, associated component of the WMM complex, a complex that mediates N6-methyladenosine (m6A) methylation of RNAs, a modification that plays a role in the efficiency of mRNA splicing and RNA processing. The protein is Pre-mRNA-splicing regulator WTAP of Xenopus tropicalis (Western clawed frog).